The sequence spans 445 residues: Tubulin beta-4B chain (445 aa).

The MREI motif motif lies at 1 to 4 (MREI). Gln11 is a binding site for GTP. Phosphothreonine is present on Thr55. Residue Lys58 is modified to N6-acetyllysine. GTP contacts are provided by Glu69, Ser138, Gly142, Thr143, and Gly144. Glu69 contributes to the Mg(2+) binding site. The residue at position 172 (Ser172) is a Phosphoserine; by CDK1. Residues Asn204 and Asn226 each contribute to the GTP site. Residues 426–445 (QDATAEEEGEFEEEAEEEVA) form a disordered region. Positions 429 to 445 (TAEEEGEFEEEAEEEVA) are enriched in acidic residues. Glu438 is modified (5-glutamyl polyglutamate).

This sequence belongs to the tubulin family. As to quaternary structure, dimer of alpha and beta chains. A typical microtubule is a hollow water-filled tube with an outer diameter of 25 nm and an inner diameter of 15 nM. Alpha-beta heterodimers associate head-to-tail to form protofilaments running lengthwise along the microtubule wall with the beta-tubulin subunit facing the microtubule plus end conferring a structural polarity. Microtubules usually have 13 protofilaments but different protofilament numbers can be found in some organisms and specialized cells. Component of sperm flagellar doublet microtubules. It depends on Mg(2+) as a cofactor. Post-translationally, some glutamate residues at the C-terminus are polyglycylated, resulting in polyglycine chains on the gamma-carboxyl group. Glycylation is mainly limited to tubulin incorporated into axonemes (cilia and flagella) whereas glutamylation is prevalent in neuronal cells, centrioles, axonemes, and the mitotic spindle. Both modifications can coexist on the same protein on adjacent residues, and lowering polyglycylation levels increases polyglutamylation, and reciprocally. Cilia and flagella glycylation is required for their stability and maintenance. Flagella glycylation controls sperm motility. In terms of processing, some glutamate residues at the C-terminus are polyglutamylated, resulting in polyglutamate chains on the gamma-carboxyl group. Polyglutamylation plays a key role in microtubule severing by spastin (SPAST). SPAST preferentially recognizes and acts on microtubules decorated with short polyglutamate tails: severing activity by SPAST increases as the number of glutamates per tubulin rises from one to eight, but decreases beyond this glutamylation threshold. Glutamylation is also involved in cilia motility. Phosphorylated on Ser-172 by CDK1 during the cell cycle, from metaphase to telophase, but not in interphase. This phosphorylation inhibits tubulin incorporation into microtubules.

It is found in the cytoplasm. It localises to the cytoskeleton. Its subcellular location is the flagellum axoneme. Functionally, tubulin is the major constituent of microtubules, a cylinder consisting of laterally associated linear protofilaments composed of alpha- and beta-tubulin heterodimers. Microtubules grow by the addition of GTP-tubulin dimers to the microtubule end, where a stabilizing cap forms. Below the cap, tubulin dimers are in GDP-bound state, owing to GTPase activity of alpha-tubulin. The chain is Tubulin beta-4B chain (TUBB4B) from Bos taurus (Bovine).